The chain runs to 308 residues: Low density lipoprotein receptor adapter protein 1 (308 aa).

Met1 bears the N-acetylmethionine mark. A phosphoserine mark is found at Ser14, Ser186, and Ser202. In terms of domain architecture, PID spans 42–196 (LLEGMLFSLK…QEGGDVLGAR (155 aa)). The short motif at 212–216 (LLDLE) is the Clathrin box element. Residues 249 to 276 (WELDDGLDEAFSRLAQSRTNPQVLDTGL) form an AP-2 complex binding region. Residues 257–266 (EAFSRLAQSR) carry the [DE]-X(1,2)-F-X-X-[FL]-X-X-X-R motif motif.

Interacts (via PID domain) with LDLR (via NPXY motif). Binds to soluble clathrin trimers. Interacts with AP2B1; the interaction mediates the association with the AP-2 complex. Interacts with VLDLR. Interacts with LRP2. As to expression, expressed at high levels in the kidney, liver, and placenta, with lower levels detectable in brain, heart, muscle, colon, spleen, intestine, lung, and leukocytes.

The protein resides in the cytoplasm. Adapter protein (clathrin-associated sorting protein (CLASP)) required for efficient endocytosis of the LDL receptor (LDLR) in polarized cells such as hepatocytes and lymphocytes, but not in non-polarized cells (fibroblasts). May be required for LDL binding and internalization but not for receptor clustering in coated pits. May facilitate the endocytosis of LDLR and LDLR-LDL complexes from coated pits by stabilizing the interaction between the receptor and the structural components of the pits. May also be involved in the internalization of other LDLR family members. Binds to phosphoinositides, which regulate clathrin bud assembly at the cell surface. Required for trafficking of LRP2 to the endocytic recycling compartment which is necessary for LRP2 proteolysis, releasing a tail fragment which translocates to the nucleus and mediates transcriptional repression. This is Low density lipoprotein receptor adapter protein 1 from Homo sapiens (Human).